The following is an 840-amino-acid chain: Heat shock 70 kDa protein 4 (840 aa).

Residue Lys-53 is modified to N6-acetyllysine. The residue at position 76 (Ser-76) is a Phosphoserine. 2 positions are modified to phosphotyrosine: Tyr-89 and Tyr-336. Phosphoserine occurs at positions 393 and 415. The residue at position 430 (Lys-430) is an N6-acetyllysine. The segment at 500–575 (VHKSEENEEP…QAKKAKVKTS (76 aa)) is disordered. Residues 514–533 (QNAKEEEKMQVDQEEPHVEE) show a composition bias toward basic and acidic residues. Thr-538 is modified (phosphothreonine). A phosphoserine mark is found at Ser-546 and Ser-647. Residue Tyr-660 is modified to Phosphotyrosine. N6-acetyllysine is present on Lys-679. Ser-756 is modified (phosphoserine). An N6-methyllysine modification is found at Lys-773. The interval 779 to 840 (CSPIISKPKP…DKKLPEMDID (62 aa)) is disordered. 2 stretches are compositionally biased toward basic and acidic residues: residues 788 to 799 (PKVEPPKEEQKN) and 829 to 840 (DSDKKLPEMDID).

The protein belongs to the heat shock protein 70 family. Interacts with TJP1/ZO-1.

It localises to the cytoplasm. In Homo sapiens (Human), this protein is Heat shock 70 kDa protein 4 (HSPA4).